The primary structure comprises 808 residues: Phenylalanine--tRNA ligase beta subunit (808 aa).

The tRNA-binding domain maps to 40–157 (NKGATNVVVG…QSVEPGQDAL (118 aa)). In terms of domain architecture, B5 spans 411 to 486 (RSERVIALDL…RLYGYDELPS (76 aa)). Mg(2+)-binding residues include aspartate 464, aspartate 470, glutamate 473, and glutamate 474. Positions 714 to 807 (PRYPAITRDM…VQKQTGAVLR (94 aa)) constitute an FDX-ACB domain.

The protein belongs to the phenylalanyl-tRNA synthetase beta subunit family. Type 1 subfamily. Tetramer of two alpha and two beta subunits. Requires Mg(2+) as cofactor.

It localises to the cytoplasm. The catalysed reaction is tRNA(Phe) + L-phenylalanine + ATP = L-phenylalanyl-tRNA(Phe) + AMP + diphosphate + H(+). The protein is Phenylalanine--tRNA ligase beta subunit of Shouchella clausii (strain KSM-K16) (Alkalihalobacillus clausii).